Consider the following 472-residue polypeptide: Uronate isomerase (472 aa).

The protein belongs to the metallo-dependent hydrolases superfamily. Uronate isomerase family.

It catalyses the reaction D-glucuronate = D-fructuronate. The catalysed reaction is aldehydo-D-galacturonate = keto-D-tagaturonate. Its pathway is carbohydrate metabolism; pentose and glucuronate interconversion. This chain is Uronate isomerase, found in Shouchella clausii (strain KSM-K16) (Alkalihalobacillus clausii).